The sequence spans 61 residues: Probable tautomerase spyM18_1099 (61 aa).

The active-site Proton acceptor; via imino nitrogen is the Pro-2.

This sequence belongs to the 4-oxalocrotonate tautomerase family.

The chain is Probable tautomerase spyM18_1099 from Streptococcus pyogenes serotype M18 (strain MGAS8232).